Here is a 137-residue protein sequence, read N- to C-terminus: Nucleoside diphosphate kinase (137 aa).

6 residues coordinate ATP: lysine 9, phenylalanine 57, arginine 85, threonine 91, arginine 102, and asparagine 112. The active-site Pros-phosphohistidine intermediate is histidine 115.

This sequence belongs to the NDK family. As to quaternary structure, homotetramer. Mg(2+) is required as a cofactor.

It is found in the cytoplasm. It carries out the reaction a 2'-deoxyribonucleoside 5'-diphosphate + ATP = a 2'-deoxyribonucleoside 5'-triphosphate + ADP. The catalysed reaction is a ribonucleoside 5'-diphosphate + ATP = a ribonucleoside 5'-triphosphate + ADP. In terms of biological role, major role in the synthesis of nucleoside triphosphates other than ATP. The ATP gamma phosphate is transferred to the NDP beta phosphate via a ping-pong mechanism, using a phosphorylated active-site intermediate. In Campylobacter jejuni subsp. jejuni serotype O:6 (strain 81116 / NCTC 11828), this protein is Nucleoside diphosphate kinase.